The chain runs to 459 residues: Zinc finger protein 213 (459 aa).

The region spanning 45–126 is the SCAN box domain; sequence RQRFRQFCYG…VALVEDLQKQ (82 aa). A disordered region spans residues 128-188; it reads VKAWRQDVPS…ALLKEGRPGE (61 aa). One can recognise a KRAB domain in the interval 202–292; it reads VALGDIPFYF…ENRPRAALGP (91 aa). 5 consecutive C2H2-type zinc fingers follow at residues 317-339, 345-367, 373-395, 401-423, and 429-451; these read HSCG…QRTH, HKCP…QGVH, FSCS…QRIH, FGCS…RRVH, and FGCG…QSLH.

This sequence belongs to the krueppel C2H2-type zinc-finger protein family. In terms of tissue distribution, widely expressed with highest levels in testis.

It is found in the nucleus. In terms of biological role, may be involved in transcriptional regulation. The polypeptide is Zinc finger protein 213 (ZNF213) (Homo sapiens (Human)).